Reading from the N-terminus, the 294-residue chain is Phosphoribosylaminoimidazole-succinocarboxamide synthase (294 aa).

It belongs to the SAICAR synthetase family.

The enzyme catalyses 5-amino-1-(5-phospho-D-ribosyl)imidazole-4-carboxylate + L-aspartate + ATP = (2S)-2-[5-amino-1-(5-phospho-beta-D-ribosyl)imidazole-4-carboxamido]succinate + ADP + phosphate + 2 H(+). Its pathway is purine metabolism; IMP biosynthesis via de novo pathway; 5-amino-1-(5-phospho-D-ribosyl)imidazole-4-carboxamide from 5-amino-1-(5-phospho-D-ribosyl)imidazole-4-carboxylate: step 1/2. This chain is Phosphoribosylaminoimidazole-succinocarboxamide synthase, found in Rhodococcus opacus (strain B4).